A 243-amino-acid chain; its full sequence is Glucosamine-6-phosphate deaminase (243 aa).

Aspartate 67 acts as the Proton acceptor; for enolization step in catalysis. Asparagine 137 acts as the For ring-opening step in catalysis. The active-site Proton acceptor; for ring-opening step is the histidine 139. The active-site For ring-opening step is the glutamate 144.

This sequence belongs to the glucosamine/galactosamine-6-phosphate isomerase family. NagB subfamily.

The catalysed reaction is alpha-D-glucosamine 6-phosphate + H2O = beta-D-fructose 6-phosphate + NH4(+). The protein operates within amino-sugar metabolism; N-acetylneuraminate degradation; D-fructose 6-phosphate from N-acetylneuraminate: step 5/5. Functionally, catalyzes the reversible isomerization-deamination of glucosamine 6-phosphate (GlcN6P) to form fructose 6-phosphate (Fru6P) and ammonium ion. This chain is Glucosamine-6-phosphate deaminase, found in Staphylococcus epidermidis (strain ATCC 35984 / DSM 28319 / BCRC 17069 / CCUG 31568 / BM 3577 / RP62A).